The chain runs to 353 residues: UPF0283 membrane protein YcjF (353 aa).

Topologically, residues 1-69 are periplasmic; that stretch reads MTEPLKPRID…LRPKRSLWRK (69 aa). The chain crosses the membrane as a helical span at residues 70–90; sequence MVMGGLALFGASVVGQGVQWT. At 91–99 the chain is on the cytoplasmic side; it reads MNAWQTQDW. Residues 100 to 120 traverse the membrane as a helical segment; it reads VALGGCAAGALIIGAGVGSVV. The Periplasmic portion of the chain corresponds to 121 to 212; that stretch reads TEWRRLWRLR…ARREISRSAA (92 aa). A helical membrane pass occupies residues 213–233; the sequence is ESTLMIAVSPLALVDMAFIAW. At 234–353 the chain is on the cytoplasmic side; it reads RNLRLINRIA…LQKGKTPSEK (120 aa).

Belongs to the UPF0283 family.

The protein resides in the cell inner membrane. This chain is UPF0283 membrane protein YcjF (ycjF), found in Escherichia coli O157:H7.